Consider the following 197-residue polypeptide: MIGKLKNLFKLGKGKKEEKAKKSLEGKGLIIFENTKDAMRAESILKDKYKIKVVAPPPEIREGCDLAIEYELIDEFGIKRELESNDIKPLKFISLNDYSLKPLELIKVKEVDGFILVRCGNMKITIDKEGNIVNISGGGCPDVPYLALKLKGRNIKDIKEEETPKNLGFTLCAYILNKGSSQRGHSWTIIDFEVLSI.

This is an uncharacterized protein from Methanocaldococcus jannaschii (strain ATCC 43067 / DSM 2661 / JAL-1 / JCM 10045 / NBRC 100440) (Methanococcus jannaschii).